Consider the following 143-residue polypeptide: Heat shock protein 16 (143 aa).

The 114-residue stretch at 30–143 folds into the sHSP domain; sequence QIPGELSPSI…SQTKKQIAIK (114 aa).

It belongs to the small heat shock protein (HSP20) family.

The protein localises to the cytoplasm. It localises to the nucleus. The protein is Heat shock protein 16 (hsp16) of Schizosaccharomyces pombe (strain 972 / ATCC 24843) (Fission yeast).